A 364-amino-acid chain; its full sequence is Aminomethyltransferase (364 aa).

Belongs to the GcvT family. As to quaternary structure, the glycine cleavage system is composed of four proteins: P, T, L and H.

It carries out the reaction N(6)-[(R)-S(8)-aminomethyldihydrolipoyl]-L-lysyl-[protein] + (6S)-5,6,7,8-tetrahydrofolate = N(6)-[(R)-dihydrolipoyl]-L-lysyl-[protein] + (6R)-5,10-methylene-5,6,7,8-tetrahydrofolate + NH4(+). Functionally, the glycine cleavage system catalyzes the degradation of glycine. The polypeptide is Aminomethyltransferase (Shewanella loihica (strain ATCC BAA-1088 / PV-4)).